Consider the following 262-residue polypeptide: uncharacterized protein (262 aa).

6 consecutive transmembrane segments (helical) span residues 7 to 27, 58 to 78, 114 to 134, 140 to 160, 179 to 199, and 216 to 236; these read LAVA…LAHM, DTLG…IVFG, FLAF…VLGG, GGFQ…IAFG, GALG…YYLF, and IITA…VLAG.

Its subcellular location is the cell membrane. This is an uncharacterized protein from Methanocaldococcus jannaschii (strain ATCC 43067 / DSM 2661 / JAL-1 / JCM 10045 / NBRC 100440) (Methanococcus jannaschii).